Here is a 390-residue protein sequence, read N- to C-terminus: Stearoyl-[acyl-carrier-protein] 9-desaturase 5, chloroplastic (390 aa).

Residues 1-22 form a disordered region; sequence MAFAASHTASPSSCGGVAQRRS. A chloroplast-targeting transit peptide spans 1–31; the sequence is MAFAASHTASPSSCGGVAQRRSNGMSPVVAM. The Fe cation site is built by E132, E170, H173, E223, E256, and H259.

Belongs to the fatty acid desaturase type 2 family. As to quaternary structure, homodimer. Requires Fe(2+) as cofactor.

Its subcellular location is the plastid. The protein localises to the chloroplast. The enzyme catalyses octadecanoyl-[ACP] + 2 reduced [2Fe-2S]-[ferredoxin] + O2 + 2 H(+) = (9Z)-octadecenoyl-[ACP] + 2 oxidized [2Fe-2S]-[ferredoxin] + 2 H2O. The protein operates within lipid metabolism; fatty acid metabolism. In terms of biological role, converts stearoyl-ACP to oleoyl-ACP by introduction of a cis double bond between carbons 9 and 10 of the acyl chain. This chain is Stearoyl-[acyl-carrier-protein] 9-desaturase 5, chloroplastic, found in Oryza sativa subsp. japonica (Rice).